A 469-amino-acid polypeptide reads, in one-letter code: ATP synthase subunit beta (469 aa).

156–163 (GGAGVGKT) contributes to the ATP binding site.

The protein belongs to the ATPase alpha/beta chains family. In terms of assembly, F-type ATPases have 2 components, CF(1) - the catalytic core - and CF(0) - the membrane proton channel. CF(1) has five subunits: alpha(3), beta(3), gamma(1), delta(1), epsilon(1). CF(0) has three main subunits: a(1), b(2) and c(9-12). The alpha and beta chains form an alternating ring which encloses part of the gamma chain. CF(1) is attached to CF(0) by a central stalk formed by the gamma and epsilon chains, while a peripheral stalk is formed by the delta and b chains.

The protein localises to the cell membrane. The catalysed reaction is ATP + H2O + 4 H(+)(in) = ADP + phosphate + 5 H(+)(out). Its function is as follows. Produces ATP from ADP in the presence of a proton gradient across the membrane. The catalytic sites are hosted primarily by the beta subunits. The protein is ATP synthase subunit beta of Bacillus cereus (strain AH820).